A 284-amino-acid polypeptide reads, in one-letter code: 4-diphosphocytidyl-2-C-methyl-D-erythritol kinase (284 aa).

Lys-14 is a catalytic residue. Residue 98-108 coordinates ATP; it reads PMGGGLGGGSS. Residue Asp-140 is part of the active site.

This sequence belongs to the GHMP kinase family. IspE subfamily.

The enzyme catalyses 4-CDP-2-C-methyl-D-erythritol + ATP = 4-CDP-2-C-methyl-D-erythritol 2-phosphate + ADP + H(+). It participates in isoprenoid biosynthesis; isopentenyl diphosphate biosynthesis via DXP pathway; isopentenyl diphosphate from 1-deoxy-D-xylulose 5-phosphate: step 3/6. Its function is as follows. Catalyzes the phosphorylation of the position 2 hydroxy group of 4-diphosphocytidyl-2C-methyl-D-erythritol. The polypeptide is 4-diphosphocytidyl-2-C-methyl-D-erythritol kinase (Shewanella baltica (strain OS185)).